The primary structure comprises 182 residues: Ribosome maturation factor RimM (182 aa).

Positions E103–F182 constitute a PRC barrel domain.

It belongs to the RimM family. In terms of assembly, binds ribosomal protein uS19.

The protein localises to the cytoplasm. In terms of biological role, an accessory protein needed during the final step in the assembly of 30S ribosomal subunit, possibly for assembly of the head region. Essential for efficient processing of 16S rRNA. May be needed both before and after RbfA during the maturation of 16S rRNA. It has affinity for free ribosomal 30S subunits but not for 70S ribosomes. The protein is Ribosome maturation factor RimM of Vibrio cholerae serotype O1 (strain ATCC 39315 / El Tor Inaba N16961).